Reading from the N-terminus, the 254-residue chain is Thiazole synthase (254 aa).

The active-site Schiff-base intermediate with DXP is the lysine 95. 1-deoxy-D-xylulose 5-phosphate is bound by residues glycine 156, alanine 182–glycine 183, and asparagine 204–threonine 205.

It belongs to the ThiG family. In terms of assembly, homotetramer. Forms heterodimers with either ThiH or ThiS.

It is found in the cytoplasm. It carries out the reaction [ThiS sulfur-carrier protein]-C-terminal-Gly-aminoethanethioate + 2-iminoacetate + 1-deoxy-D-xylulose 5-phosphate = [ThiS sulfur-carrier protein]-C-terminal Gly-Gly + 2-[(2R,5Z)-2-carboxy-4-methylthiazol-5(2H)-ylidene]ethyl phosphate + 2 H2O + H(+). The protein operates within cofactor biosynthesis; thiamine diphosphate biosynthesis. In terms of biological role, catalyzes the rearrangement of 1-deoxy-D-xylulose 5-phosphate (DXP) to produce the thiazole phosphate moiety of thiamine. Sulfur is provided by the thiocarboxylate moiety of the carrier protein ThiS. In vitro, sulfur can be provided by H(2)S. The chain is Thiazole synthase from Shewanella sediminis (strain HAW-EB3).